We begin with the raw amino-acid sequence, 193 residues long: p53 apoptosis effector related to PMP-22 (193 aa).

4 helical membrane-spanning segments follow: residues 12–32 (RWILPLLLLSAIAFDIIALAG), 79–99 (AMLFCGFIILVICFILSFFAL), 110–130 (VIGGLLALAAVFQIISLVIYP), and 151–171 (WAYGFGWAATIILIGCAFFFC).

The protein belongs to the TMEM47 family. As to quaternary structure, (Microbial infection) Interacts with S.typhimurium sipA and sctB1/sipC. Expressed in skin, heart, placental, liver, pancreas, keratinocytes and dermal fibroblasts. May translocate to the intestinal apical epithelial cell surface via sipA and sctB1/sipC-promoted exocytic translocation following infection by S. Typhimurium.

The protein localises to the cell junction. The protein resides in the desmosome. Its subcellular location is the cell membrane. It localises to the cytoplasm. In terms of biological role, component of intercellular desmosome junctions. Plays a role in stratified epithelial integrity and cell-cell adhesion by promoting desmosome assembly. Thereby plays a role in barrier function of the skin against infection. Plays a role in mammary epithelial tissue homeostasis and remodeling during and after pregnancy, potentially via its involvement in desmosome cell-cell junctions. Required for tooth enamel development via facilitating desmosome-mediated ameloblast adhesion to the stratum intermedium during the transitional stage of amelogenesis. May also play a role in downstream transcriptional regulation of other genes involved in amelogenesis such as AMBN, ENAM, MMP20 and KLK4. Plays a role as an effector in the TP53-dependent apoptotic pathway. Positively regulates apoptosis in T-helper 17 (Th17) cell populations via caspase-dependent signaling. Promotes neutrophil transepithelial migration in response to chemoattractants such as hepoxilin A3 (HXA3), N-Formylmethionyl-leucyl-phenylalanine (fMLP) and CXCL8/IL-8. Required for neutrophil transepithelial migration in response to S.typhimurium infection. May act as a positive regulator of endothelial cell apoptosis in response to blood flow-derived shear stress. The protein is p53 apoptosis effector related to PMP-22 of Homo sapiens (Human).